Consider the following 462-residue polypeptide: NAD-capped RNA hydrolase NUDT12 (462 aa).

ANK repeat units follow at residues 11-40 (EIVT…SLLN), 45-74 (NGWT…DRSI), and 78-98 (SRQT…ANLL). Lys-185 carries the post-translational modification N6-succinyllysine. Positions 284 and 287 each coordinate Zn(2+). At Lys-292 the chain carries N6-succinyllysine. Zn(2+) is bound by residues Cys-302 and Cys-307. Residues Tyr-318, 354–356 (AGF), Glu-370, Glu-374, and Glu-415 each bind substrate. Residues 319–453 (PRVDPVVIMQ…SRAIAHQLIK (135 aa)) enclose the Nudix hydrolase domain. Positions 354, 370, 374, and 415 each coordinate Mg(2+). The Nudix box signature appears at 355-376 (GFIEPGETIEDAVRREVEEESG). Residues 460–462 (PNL) carry the Microbody targeting signal motif.

The protein belongs to the Nudix hydrolase family. NudC subfamily. As to quaternary structure, homodimer. Homodimerization is essential for its catalytic activity and protein stability. Interacts (via ANK repeats) with BLMH. Mg(2+) is required as a cofactor. The cofactor is Zn(2+).

It is found in the cytoplasm. It localises to the peroxisome. The protein resides in the cytoplasmic granule. It carries out the reaction a 5'-end NAD(+)-phospho-ribonucleoside in mRNA + H2O = a 5'-end phospho-adenosine-phospho-ribonucleoside in mRNA + beta-nicotinamide D-ribonucleotide + 2 H(+). The enzyme catalyses NAD(+) + H2O = beta-nicotinamide D-ribonucleotide + AMP + 2 H(+). It catalyses the reaction NADH + H2O = reduced beta-nicotinamide D-ribonucleotide + AMP + 2 H(+). The catalysed reaction is NADPH + H2O = reduced beta-nicotinamide D-ribonucleotide + adenosine 2',5'-bisphosphate + 2 H(+). In terms of biological role, mRNA decapping enzyme that specifically removes the nicotinamide adenine dinucleotide (NAD) cap from a subset of mRNAs by hydrolyzing the diphosphate linkage to produce nicotinamide mononucleotide (NMN) and 5' monophosphate mRNA. The NAD-cap is present at the 5'-end of some RNAs; in contrast to the canonical N7 methylguanosine (m7G) cap, the NAD cap promotes mRNA decay. Preferentially acts on NAD-capped transcripts in response to nutrient stress. Also acts on free nicotinamide adenine dinucleotide molecules: hydrolyzes NAD(H) into NMN(H) and AMP, and NADPH into NMNH and 2',5'-ADP. May act to regulate the concentration of peroxisomal nicotinamide nucleotide cofactors required for oxidative metabolism in this organelle. Regulates the levels of circadian clock components PER1, PER2, PER3 and CRY2 in the liver. The polypeptide is NAD-capped RNA hydrolase NUDT12 (Homo sapiens (Human)).